Consider the following 914-residue polypeptide: Neutral alpha-glucosidase C (914 aa).

The Nucleophile role is filled by D511. The active site involves E514. The Proton donor role is filled by D587.

Belongs to the glycosyl hydrolase 31 family.

The catalysed reaction is Hydrolysis of terminal, non-reducing (1-&gt;4)-linked alpha-D-glucose residues with release of alpha-D-glucose.. In terms of biological role, has alpha-glucosidase activity. The chain is Neutral alpha-glucosidase C (GANC) from Homo sapiens (Human).